The following is a 132-amino-acid chain: MNITDPIADMLTRIRNANDTNKDVVNIPASNMKISIARILKEEGYIKDYKVIEKKPQNALRIYLKYSKNGEKVISGLKRISKPGLRVYVKKDEVPKVLGGLGIAVLSTSRGILTDKQARQEGIGGEVLCYVW.

This sequence belongs to the universal ribosomal protein uS8 family. As to quaternary structure, part of the 30S ribosomal subunit. Contacts proteins S5 and S12.

Functionally, one of the primary rRNA binding proteins, it binds directly to 16S rRNA central domain where it helps coordinate assembly of the platform of the 30S subunit. This is Small ribosomal subunit protein uS8 from Halothermothrix orenii (strain H 168 / OCM 544 / DSM 9562).